Reading from the N-terminus, the 322-residue chain is Ethylmalonyl-CoA decarboxylase (322 aa).

Lys232 is subject to N6-acetyllysine; alternate. The residue at position 232 (Lys232) is an N6-succinyllysine; alternate. Lys316 is subject to N6-succinyllysine.

It belongs to the enoyl-CoA hydratase/isomerase family.

Its subcellular location is the cytoplasm. It is found in the cytosol. It catalyses the reaction (2S)-ethylmalonyl-CoA + H(+) = butanoyl-CoA + CO2. The catalysed reaction is (S)-methylmalonyl-CoA + H(+) = propanoyl-CoA + CO2. It carries out the reaction (2R)-ethylmalonyl-CoA + H(+) = butanoyl-CoA + CO2. Its function is as follows. Decarboxylates ethylmalonyl-CoA, a potentially toxic metabolite, to form butyryl-CoA, suggesting it might be involved in metabolite proofreading. Acts preferentially on (S)-ethylmalonyl-CoA but also has some activity on the (R)-isomer. Also has methylmalonyl-CoA decarboxylase activity at lower level. This chain is Ethylmalonyl-CoA decarboxylase (Echdc1), found in Mus musculus (Mouse).